The chain runs to 153 residues: Ribosome maturation factor RimP (153 aa).

This sequence belongs to the RimP family.

The protein resides in the cytoplasm. Required for maturation of 30S ribosomal subunits. In Histophilus somni (strain 2336) (Haemophilus somnus), this protein is Ribosome maturation factor RimP.